Consider the following 456-residue polypeptide: uncharacterized protein (456 aa).

Over residues 415 to 428 (SNSNGSSSSGNSSS) the composition is skewed to low complexity. Positions 415–444 (SNSNGSSSSGNSSSIYNSHLMNDKKKNNNA) are disordered.

This is an uncharacterized protein from Saccharomyces cerevisiae (strain ATCC 204508 / S288c) (Baker's yeast).